A 493-amino-acid chain; its full sequence is 11S globulin seed storage protein G3 (493 aa).

An N-terminal signal peptide occupies residues M1 to A20. Intrachain disulfides connect C32–C65 and C103–C312. The Cupin type-1 1 domain occupies I37 to Q248. Disordered stretches follow at residues P190–N229 and I269–N305. Composition is skewed to low complexity over residues Q191–G221 and R280–G298. Residues V318–Q467 form the Cupin type-1 2 domain.

It belongs to the 11S seed storage protein (globulins) family. As to quaternary structure, hexamer; each subunit is composed of an acidic and a basic chain derived from a single precursor and linked by a disulfide bond.

Its function is as follows. This is a seed storage protein. In Helianthus annuus (Common sunflower), this protein is 11S globulin seed storage protein G3 (HAG3).